Reading from the N-terminus, the 309-residue chain is NAD kinase (309 aa).

The active-site Proton acceptor is the Asp89. NAD(+) contacts are provided by residues 89 to 90 (DG), 163 to 164 (NE), His174, Arg191, Asp193, and 204 to 209 (TAYALS).

Belongs to the NAD kinase family. It depends on a divalent metal cation as a cofactor.

It is found in the cytoplasm. The enzyme catalyses NAD(+) + ATP = ADP + NADP(+) + H(+). In terms of biological role, involved in the regulation of the intracellular balance of NAD and NADP, and is a key enzyme in the biosynthesis of NADP. Catalyzes specifically the phosphorylation on 2'-hydroxyl of the adenosine moiety of NAD to yield NADP. This chain is NAD kinase, found in Shewanella baltica (strain OS155 / ATCC BAA-1091).